The sequence spans 148 residues: Aspartate carbamoyltransferase regulatory chain (148 aa).

Positions 106, 111, 134, and 137 each coordinate Zn(2+).

Belongs to the PyrI family. Contains catalytic and regulatory chains. Zn(2+) serves as cofactor.

In terms of biological role, involved in allosteric regulation of aspartate carbamoyltransferase. This Methanococcus maripaludis (strain C5 / ATCC BAA-1333) protein is Aspartate carbamoyltransferase regulatory chain.